The sequence spans 146 residues: uncharacterized protein (146 aa).

A helical membrane pass occupies residues 7–24 (VIALFLVTGLTLYAIRLL).

It is found in the membrane. This is an uncharacterized protein from Haemophilus influenzae (strain ATCC 51907 / DSM 11121 / KW20 / Rd).